Consider the following 250-residue polypeptide: 2,3-bisphosphoglycerate-dependent phosphoglycerate mutase (250 aa).

Residues 8–15, 21–22, R60, 87–90, K98, 114–115, and 183–184 each bind substrate; these read RHGESQWN, TG, ERHY, RR, and GN. Residue H9 is the Tele-phosphohistidine intermediate of the active site. E87 functions as the Proton donor/acceptor in the catalytic mechanism.

Belongs to the phosphoglycerate mutase family. BPG-dependent PGAM subfamily. In terms of assembly, homodimer.

The catalysed reaction is (2R)-2-phosphoglycerate = (2R)-3-phosphoglycerate. Its pathway is carbohydrate degradation; glycolysis; pyruvate from D-glyceraldehyde 3-phosphate: step 3/5. In terms of biological role, catalyzes the interconversion of 2-phosphoglycerate and 3-phosphoglycerate. The chain is 2,3-bisphosphoglycerate-dependent phosphoglycerate mutase from Bordetella petrii (strain ATCC BAA-461 / DSM 12804 / CCUG 43448).